Here is a 215-residue protein sequence, read N- to C-terminus: NADH-quinone oxidoreductase subunit C (215 aa).

It belongs to the complex I 30 kDa subunit family. NDH-1 is composed of 14 different subunits. Subunits NuoB, C, D, E, F, and G constitute the peripheral sector of the complex.

It localises to the cell inner membrane. It carries out the reaction a quinone + NADH + 5 H(+)(in) = a quinol + NAD(+) + 4 H(+)(out). NDH-1 shuttles electrons from NADH, via FMN and iron-sulfur (Fe-S) centers, to quinones in the respiratory chain. The immediate electron acceptor for the enzyme in this species is believed to be ubiquinone. Couples the redox reaction to proton translocation (for every two electrons transferred, four hydrogen ions are translocated across the cytoplasmic membrane), and thus conserves the redox energy in a proton gradient. This chain is NADH-quinone oxidoreductase subunit C, found in Dinoroseobacter shibae (strain DSM 16493 / NCIMB 14021 / DFL 12).